Consider the following 397-residue polypeptide: Ubiquitin-like modifier-activating enzyme 5 (397 aa).

ATP-binding residues include Gly-76, Asp-97, Lys-120, Asn-143, and Asn-177. Positions 219 and 222 each coordinate Zn(2+). Catalysis depends on Cys-243, which acts as the Glycyl thioester intermediate. Positions 296 and 301 each coordinate Zn(2+). Residues 343–384 (PSDAPTDLSQSTDVGQGLRLAYEAPEKSSAEATQAATAPVDD) are disordered.

Belongs to the ubiquitin-activating E1 family. UBA5 subfamily.

Its function is as follows. E1-like enzyme which activates UFM1. The sequence is that of Ubiquitin-like modifier-activating enzyme 5 from Drosophila pseudoobscura pseudoobscura (Fruit fly).